A 397-amino-acid polypeptide reads, in one-letter code: Nuclear RNA export factor 5 (397 aa).

The RRM domain occupies 13–92 (WFKVTIPYGI…IFVSHFTAPY (80 aa)). LRR repeat units follow at residues 160 to 185 (ELLS…EKAP), 186 to 209 (KVKT…VKGL), 210 to 237 (KLEE…AIRD), and 238 to 265 (CFPK…ETMK). The 88-residue stretch at 280-367 (LVLQFLQQSN…ESQRWWCLLS (88 aa)) folds into the NTF2; truncated domain.

This sequence belongs to the NXF family. As to quaternary structure, interacts with NXT1 and NXT2.

It localises to the cytoplasm. The protein localises to the nucleus. Functionally, could be involved in the export of mRNA from the nucleus to the cytoplasm. Could also have a role in polarized cytoplasmic transport and localization of mRNA in neurons. The protein is Nuclear RNA export factor 5 (NXF5) of Homo sapiens (Human).